We begin with the raw amino-acid sequence, 175 residues long: Nucleoside triphosphate/diphosphate phosphatase (175 aa).

Arg23 serves as the catalytic Proton donor. Mg(2+) contacts are provided by Asn87, Asp103, Asp105, Asp107, Asp120, and Glu123.

Belongs to the Ntdp family. The cofactor is Mg(2+).

It catalyses the reaction a ribonucleoside 5'-triphosphate + H2O = a ribonucleoside 5'-diphosphate + phosphate + H(+). The catalysed reaction is a ribonucleoside 5'-diphosphate + H2O = a ribonucleoside 5'-phosphate + phosphate + H(+). Functionally, has nucleoside phosphatase activity towards nucleoside triphosphates and nucleoside diphosphates. The protein is Nucleoside triphosphate/diphosphate phosphatase of Halalkalibacterium halodurans (strain ATCC BAA-125 / DSM 18197 / FERM 7344 / JCM 9153 / C-125) (Bacillus halodurans).